A 208-amino-acid chain; its full sequence is MTKVLFVKANNRPAEQAVSVKLYEAFLASYKEAHPNDTVVELDLYKEELPYVGVDMINGTFKAGKGFDLTEEEAKAVAVADKYLNQFLEADKVVFGFPLWNLTIPAVLHTYIDYLNRAGKTFKYTPEGPVGLIGDKKIALLNARGGVYSEGPAAEVEMAVKYVASMMGFFGATNMETVVIEGHNQFPDKAEEIITAGLEEAAKVANKF.

This sequence belongs to the azoreductase type 1 family. As to quaternary structure, homodimer. Requires FMN as cofactor.

The catalysed reaction is 2 a quinone + NADH + H(+) = 2 a 1,4-benzosemiquinone + NAD(+). It carries out the reaction N,N-dimethyl-1,4-phenylenediamine + anthranilate + 2 NAD(+) = 2-(4-dimethylaminophenyl)diazenylbenzoate + 2 NADH + 2 H(+). In terms of biological role, quinone reductase that provides resistance to thiol-specific stress caused by electrophilic quinones. Its function is as follows. Also exhibits azoreductase activity. Catalyzes the reductive cleavage of the azo bond in aromatic azo compounds to the corresponding amines. The sequence is that of FMN-dependent NADH:quinone oxidoreductase 4 from Bacillus anthracis.